A 450-amino-acid chain; its full sequence is Phosphoglucosamine mutase (450 aa).

Ser-101 functions as the Phosphoserine intermediate in the catalytic mechanism. Ser-101, Asp-241, Asp-243, and Asp-245 together coordinate Mg(2+). At Ser-101 the chain carries Phosphoserine.

This sequence belongs to the phosphohexose mutase family. It depends on Mg(2+) as a cofactor. In terms of processing, activated by phosphorylation.

The catalysed reaction is alpha-D-glucosamine 1-phosphate = D-glucosamine 6-phosphate. Catalyzes the conversion of glucosamine-6-phosphate to glucosamine-1-phosphate. This Listeria monocytogenes serovar 1/2a (strain ATCC BAA-679 / EGD-e) protein is Phosphoglucosamine mutase.